The chain runs to 486 residues: Cardiolipin synthase A (486 aa).

A run of 2 helical transmembrane segments spans residues 3 to 23 (TVYT…IAGV) and 38 to 58 (MAWL…YLAV). PLD phosphodiesterase domains follow at residues 219-246 (MDLR…VDPR) and 399-426 (EGGL…DMRS). Residues His224, Lys226, Asp231, His404, Lys406, and Asp411 contribute to the active site.

This sequence belongs to the phospholipase D family. Cardiolipin synthase subfamily. ClsA sub-subfamily.

It localises to the cell inner membrane. It carries out the reaction 2 a 1,2-diacyl-sn-glycero-3-phospho-(1'-sn-glycerol) = a cardiolipin + glycerol. In terms of biological role, catalyzes the reversible phosphatidyl group transfer from one phosphatidylglycerol molecule to another to form cardiolipin (CL) (diphosphatidylglycerol) and glycerol. In Shigella boydii serotype 4 (strain Sb227), this protein is Cardiolipin synthase A.